We begin with the raw amino-acid sequence, 216 residues long: ATP phosphoribosyltransferase (216 aa).

This sequence belongs to the ATP phosphoribosyltransferase family. Short subfamily. As to quaternary structure, heteromultimer composed of HisG and HisZ subunits.

It localises to the cytoplasm. It carries out the reaction 1-(5-phospho-beta-D-ribosyl)-ATP + diphosphate = 5-phospho-alpha-D-ribose 1-diphosphate + ATP. Its pathway is amino-acid biosynthesis; L-histidine biosynthesis; L-histidine from 5-phospho-alpha-D-ribose 1-diphosphate: step 1/9. In terms of biological role, catalyzes the condensation of ATP and 5-phosphoribose 1-diphosphate to form N'-(5'-phosphoribosyl)-ATP (PR-ATP). Has a crucial role in the pathway because the rate of histidine biosynthesis seems to be controlled primarily by regulation of HisG enzymatic activity. This is ATP phosphoribosyltransferase from Microcystis aeruginosa (strain NIES-843 / IAM M-2473).